The following is a 329-amino-acid chain: Pantothenate kinase (329 aa).

Residue 107–114 (GSVAVGKS) coordinates ATP.

The protein belongs to the prokaryotic pantothenate kinase family.

It is found in the cytoplasm. The enzyme catalyses (R)-pantothenate + ATP = (R)-4'-phosphopantothenate + ADP + H(+). It participates in cofactor biosynthesis; coenzyme A biosynthesis; CoA from (R)-pantothenate: step 1/5. This chain is Pantothenate kinase, found in Streptomyces avermitilis (strain ATCC 31267 / DSM 46492 / JCM 5070 / NBRC 14893 / NCIMB 12804 / NRRL 8165 / MA-4680).